A 380-amino-acid polypeptide reads, in one-letter code: Ubiquitin-like protein 7 (380 aa).

A Ubiquitin-like domain is found at 18 to 98 (APKSILQLPE…VLRKSWPEPD (81 aa)). A disordered region spans residues 200–313 (TPMPGADSSS…SSGVQSGTPI (114 aa)). Positions 206-221 (DSSSRSMPSSSYRDMP) are enriched in low complexity. Ser230 bears the Phosphoserine mark. Low complexity-rich tracts occupy residues 239 to 253 (STRSTPSSSTPSSRP) and 270 to 293 (SELATALALASTPESSSHTPTPGT). Positions 294-313 (QGHSSGTSPMSSGVQSGTPI) are enriched in polar residues. In terms of domain architecture, UBA spans 333–377 (SLQIQWQPQLQQLRDMGIQDDELSLRALQATGGDIQAALELIFAG).

In terms of assembly, binds ubiquitin. Interacts with MAVS; this interaction enhances TRIM21-dependent 'Lys-27'-linked polyubiquitination of MAVS. Deubiquitinated by OTUD4 which stabilizes UBL7 expression.

Functionally, interferon-stimulated protein that positively regulates RNA virus-triggered innate immune signaling. Mechanistically, promotes 'Lys-27'-linked polyubiquitination of MAVS through TRIM21 leading to enhanced the IFN signaling pathway. This is Ubiquitin-like protein 7 (Ubl7) from Mus musculus (Mouse).